A 393-amino-acid chain; its full sequence is LL-diaminopimelate aminotransferase (393 aa).

Substrate-binding residues include tyrosine 14 and glycine 41. Pyridoxal 5'-phosphate contacts are provided by residues tyrosine 71, 104–105, tyrosine 128, asparagine 174, tyrosine 205, and 233–235; these read AK and SFS. 3 residues coordinate substrate: lysine 105, tyrosine 128, and asparagine 174. Lysine 236 is subject to N6-(pyridoxal phosphate)lysine. The pyridoxal 5'-phosphate site is built by arginine 244 and asparagine 275. Residues asparagine 275 and arginine 369 each contribute to the substrate site.

Belongs to the class-I pyridoxal-phosphate-dependent aminotransferase family. LL-diaminopimelate aminotransferase subfamily. In terms of assembly, homodimer. Pyridoxal 5'-phosphate is required as a cofactor.

The catalysed reaction is (2S,6S)-2,6-diaminopimelate + 2-oxoglutarate = (S)-2,3,4,5-tetrahydrodipicolinate + L-glutamate + H2O + H(+). It functions in the pathway amino-acid biosynthesis; L-lysine biosynthesis via DAP pathway; LL-2,6-diaminopimelate from (S)-tetrahydrodipicolinate (aminotransferase route): step 1/1. Functionally, involved in the synthesis of meso-diaminopimelate (m-DAP or DL-DAP), required for both lysine and peptidoglycan biosynthesis. Catalyzes the direct conversion of tetrahydrodipicolinate to LL-diaminopimelate. This chain is LL-diaminopimelate aminotransferase, found in Chlamydia muridarum (strain MoPn / Nigg).